A 480-amino-acid chain; its full sequence is Glutamyl-tRNA(Gln) amidotransferase subunit A (480 aa).

Active-site charge relay system residues include Lys74 and Ser149. Ser173 (acyl-ester intermediate) is an active-site residue.

The protein belongs to the amidase family. GatA subfamily. Heterotrimer of A, B and C subunits.

It carries out the reaction L-glutamyl-tRNA(Gln) + L-glutamine + ATP + H2O = L-glutaminyl-tRNA(Gln) + L-glutamate + ADP + phosphate + H(+). In terms of biological role, allows the formation of correctly charged Gln-tRNA(Gln) through the transamidation of misacylated Glu-tRNA(Gln) in organisms which lack glutaminyl-tRNA synthetase. The reaction takes place in the presence of glutamine and ATP through an activated gamma-phospho-Glu-tRNA(Gln). The chain is Glutamyl-tRNA(Gln) amidotransferase subunit A from Vesicomyosocius okutanii subsp. Calyptogena okutanii (strain HA).